A 294-amino-acid polypeptide reads, in one-letter code: Tetraspanin-15 (294 aa).

Residues 1–23 (MPRGDSEQVRYCARFSYLWLKFS) are Cytoplasmic-facing. A helical membrane pass occupies residues 24 to 44 (LVIYSTVFWLIGGLVLSVGIY). Topologically, residues 45-62 (AEVERQKYKTLESAFLAP) are extracellular. A helical transmembrane segment spans residues 63–83 (AIILILLGVVMFIVSFIGVLA). At 84–93 (SLRDNLCLLQ) the chain is on the cytoplasmic side. A helical transmembrane segment spans residues 94 to 114 (AFMYILGICLIIELIGGVVAL). Over 115–235 (IFRNQTIDFL…WFTDNYTIMA (121 aa)) the chain is Extracellular. N-linked (GlcNAc...) asparagine glycosylation is present at Asn-118. 4 disulfides stabilise this stretch: Cys-154–Cys-219, Cys-155–Cys-185, Cys-171–Cys-179, and Cys-186–Cys-198. N-linked (GlcNAc...) asparagine glycans are attached at residues Asn-189 and Asn-230. The helical transmembrane segment at 236 to 256 (GVLLGILLPQFLGVLLTFLYI) threads the bilayer. Residues 257-294 (TRVEDIITEHSVTDGLLGPGTKAGVEAAGTGCCMCYPI) are Cytoplasmic-facing.

This sequence belongs to the tetraspanin (TM4SF) family. As to quaternary structure, interacts with ADAM10; the interaction influences ADAM10 substrate specificity, endocytosis and turnover. Post-translationally, palmitoylated.

It is found in the cell membrane. It localises to the late endosome membrane. Functionally, part of TspanC8 subgroup, composed of 6 members that interact with the transmembrane metalloprotease ADAM10. This interaction is required for ADAM10 exit from the endoplasmic reticulum and for enzymatic maturation and trafficking to the cell surface as well as substrate specificity. Different TspanC8/ADAM10 complexes have distinct substrates. Promotes ADAM10-mediated cleavage of CDH2. Negatively regulates ligand-induced Notch activity probably by regulating ADAM10 activity. The polypeptide is Tetraspanin-15 (TSPAN15) (Bos taurus (Bovine)).